The following is a 424-amino-acid chain: Microcin H47 secretion protein MchE (424 aa).

Residues 1-25 (MFRQDALENRKMKWQGRAILLPGIP) are Cytoplasmic-facing. The chain crosses the membrane as a helical span at residues 26 to 46 (LWLIMLGSIVFITAFLMFIIV). The Periplasmic segment spans residues 47–424 (GTYSRRVNVS…KHSATGPLND (378 aa)).

Belongs to the membrane fusion protein (MFP) (TC 8.A.1) family.

The protein resides in the cell inner membrane. Its function is as follows. Probably involved, in conjunction with MchF, in the secretion of microcin H47. This chain is Microcin H47 secretion protein MchE (mchE), found in Escherichia coli.